Here is a 255-residue protein sequence, read N- to C-terminus: Imidazole glycerol phosphate synthase subunit HisF (255 aa).

Catalysis depends on residues Asp-12 and Asp-131.

This sequence belongs to the HisA/HisF family. Heterodimer of HisH and HisF.

It localises to the cytoplasm. It catalyses the reaction 5-[(5-phospho-1-deoxy-D-ribulos-1-ylimino)methylamino]-1-(5-phospho-beta-D-ribosyl)imidazole-4-carboxamide + L-glutamine = D-erythro-1-(imidazol-4-yl)glycerol 3-phosphate + 5-amino-1-(5-phospho-beta-D-ribosyl)imidazole-4-carboxamide + L-glutamate + H(+). It participates in amino-acid biosynthesis; L-histidine biosynthesis; L-histidine from 5-phospho-alpha-D-ribose 1-diphosphate: step 5/9. Functionally, IGPS catalyzes the conversion of PRFAR and glutamine to IGP, AICAR and glutamate. The HisF subunit catalyzes the cyclization activity that produces IGP and AICAR from PRFAR using the ammonia provided by the HisH subunit. The polypeptide is Imidazole glycerol phosphate synthase subunit HisF (Salinispora tropica (strain ATCC BAA-916 / DSM 44818 / JCM 13857 / NBRC 105044 / CNB-440)).